A 290-amino-acid chain; its full sequence is MKIAVYGKGGIGKSTTSCNISIALARRGKRVLQIGCDPKHDSTFTLTGFLIPTIIDTLQSKDYHYEDVWPEDVIYKGYGGVDCVEAGGPPAGAGCGGYVVGETVKLLKELNAFYEYDVILFDVLGDVVCGGFAAPLNYADYCIIITDNGFDALFAANRIAASVREKARTHPLRLAGLVGNRTSKRDLIDKYVEACPMPVLEVLPLIEDIRVSRVKGKTLFEMAESQESLNYVCDFYLNIADQILSCPEGVVPKEVPDRELFSLLSDFYLNPTLSEKENTLSPSSLDFMMV.

ATP-binding positions include 10-15 and lysine 39; that span reads GIGKST. A Mg(2+)-binding site is contributed by serine 14. Residues cysteine 95 and cysteine 129 each coordinate [4Fe-4S] cluster. 180–181 is a binding site for ATP; the sequence is NR.

Belongs to the NifH/BchL/ChlL family. As to quaternary structure, homodimer. Protochlorophyllide reductase is composed of three subunits; ChlL, ChlN and ChlB. [4Fe-4S] cluster is required as a cofactor.

The protein localises to the plastid. The protein resides in the chloroplast. The catalysed reaction is chlorophyllide a + oxidized 2[4Fe-4S]-[ferredoxin] + 2 ADP + 2 phosphate = protochlorophyllide a + reduced 2[4Fe-4S]-[ferredoxin] + 2 ATP + 2 H2O. Its pathway is porphyrin-containing compound metabolism; chlorophyll biosynthesis (light-independent). Its function is as follows. Component of the dark-operative protochlorophyllide reductase (DPOR) that uses Mg-ATP and reduced ferredoxin to reduce ring D of protochlorophyllide (Pchlide) to form chlorophyllide a (Chlide). This reaction is light-independent. The L component serves as a unique electron donor to the NB-component of the complex, and binds Mg-ATP. In Chaetosphaeridium globosum (Charophycean green alga), this protein is Light-independent protochlorophyllide reductase iron-sulfur ATP-binding protein.